The following is a 145-amino-acid chain: 3-hydroxyacyl-[acyl-carrier-protein] dehydratase FabZ (145 aa).

Residue His-47 is part of the active site.

The protein belongs to the thioester dehydratase family. FabZ subfamily.

It localises to the cytoplasm. The catalysed reaction is a (3R)-hydroxyacyl-[ACP] = a (2E)-enoyl-[ACP] + H2O. In terms of biological role, involved in unsaturated fatty acids biosynthesis. Catalyzes the dehydration of short chain beta-hydroxyacyl-ACPs and long chain saturated and unsaturated beta-hydroxyacyl-ACPs. The protein is 3-hydroxyacyl-[acyl-carrier-protein] dehydratase FabZ of Geotalea uraniireducens (strain Rf4) (Geobacter uraniireducens).